Reading from the N-terminus, the 190-residue chain is Peptidyl-prolyl cis-trans isomerase A (190 aa).

The first 24 residues, 1–24 (MFKSTLAAMAAVFALSALSPAAMA), serve as a signal peptide directing secretion. Residues 27–188 (GDPHVLLTTS…KPVVILSAKV (162 aa)) enclose the PPIase cyclophilin-type domain.

The protein belongs to the cyclophilin-type PPIase family.

Its subcellular location is the periplasm. It carries out the reaction [protein]-peptidylproline (omega=180) = [protein]-peptidylproline (omega=0). Its function is as follows. PPIases accelerate the folding of proteins. It catalyzes the cis-trans isomerization of proline imidic peptide bonds in oligopeptides. This Escherichia coli O157:H7 protein is Peptidyl-prolyl cis-trans isomerase A (ppiA).